Reading from the N-terminus, the 551-residue chain is Eukaryotic translation initiation factor 3 subunit D-2 (551 aa).

The tract at residues 108–152 (RARGRTGRGNATLGGLGGPVAGGSTANSTKYGKGRNTRNAQNMGR) is disordered. Residues 119-128 (TLGGLGGPVA) show a composition bias toward gly residues. The tract at residues 290 to 304 (QFDLLTVNETSLEPP) is RNA gate. Residues 530–551 (AFDSDGDDESESSEPFGNSIDN) are disordered. Residues 531–541 (FDSDGDDESES) are compositionally biased toward acidic residues.

Belongs to the eIF-3 subunit D family. In terms of assembly, component of the eukaryotic translation initiation factor 3 (eIF-3) complex. The eIF-3 complex interacts with pix.

The protein resides in the cytoplasm. MRNA cap-binding component of the eukaryotic translation initiation factor 3 (eIF-3) complex, which is involved in protein synthesis of a specialized repertoire of mRNAs and, together with other initiation factors, stimulates binding of mRNA and methionyl-tRNAi to the 40S ribosome. The eIF-3 complex specifically targets and initiates translation of a subset of mRNAs involved in cell proliferation. In the eIF-3 complex, eif3d specifically recognizes and binds the 7-methylguanosine cap of a subset of mRNAs. In Drosophila yakuba (Fruit fly), this protein is Eukaryotic translation initiation factor 3 subunit D-2.